We begin with the raw amino-acid sequence, 181 residues long: Protein GrpE (181 aa).

Residues 1–24 (MSEENIGENEVETPETEPSAEAEV) are compositionally biased toward acidic residues. The tract at residues 1–26 (MSEENIGENEVETPETEPSAEAEVES) is disordered.

This sequence belongs to the GrpE family. In terms of assembly, homodimer.

It is found in the cytoplasm. Participates actively in the response to hyperosmotic and heat shock by preventing the aggregation of stress-denatured proteins, in association with DnaK and GrpE. It is the nucleotide exchange factor for DnaK and may function as a thermosensor. Unfolded proteins bind initially to DnaJ; upon interaction with the DnaJ-bound protein, DnaK hydrolyzes its bound ATP, resulting in the formation of a stable complex. GrpE releases ADP from DnaK; ATP binding to DnaK triggers the release of the substrate protein, thus completing the reaction cycle. Several rounds of ATP-dependent interactions between DnaJ, DnaK and GrpE are required for fully efficient folding. This Rhizorhabdus wittichii (strain DSM 6014 / CCUG 31198 / JCM 15750 / NBRC 105917 / EY 4224 / RW1) (Sphingomonas wittichii) protein is Protein GrpE.